A 522-amino-acid polypeptide reads, in one-letter code: U4/U6 small nuclear ribonucleoprotein Prp4 (522 aa).

Over residues 1–13 (MASSRASSTQATK) the composition is skewed to polar residues. The interval 1–20 (MASSRASSTQATKTKAPDDL) is disordered. Lys27 is subject to N6-acetyllysine. WD repeat units follow at residues 229–268 (GDDR…LLHT), 271–318 (GHNT…PVAD), 321–360 (GHTV…EILH), 363–402 (GHSM…CIMF), 405–444 (GHLK…CVYT), 447–487 (AHQN…PLKT), and 490–521 (GHEG…LWMA).

Component of the precatalytic spliceosome (spliceosome B complex). Component of the U4/U6-U5 tri-snRNP complex, a building block of the precatalytic spliceosome (spliceosome B complex). The U4/U6-U5 tri-snRNP complex is composed of the U4, U6 and U5 snRNAs and at least PRPF3, PRPF4, PRPF6, PRPF8, PRPF31, SNRNP200, TXNL4A, SNRNP40, SNRPB, SNRPD1, SNRPD2, SNRPD3, SNRPE, SNRPF, SNRPG, DDX23, CD2BP2, PPIH, SNU13, EFTUD2, SART1 and USP39, plus LSM2, LSM3, LSM4, LSM5, LSM6, LSM7 and LSM8. Interacts directly with PRPF18, PPIH and PRPF3. Part of a heteromeric complex containing PPIH, PRPF3 and PRPF4 that is stable in the absence of RNA. Interacts with ERCC6.

It is found in the nucleus. The protein localises to the nucleus speckle. Its function is as follows. Plays a role in pre-mRNA splicing as component of the U4/U6-U5 tri-snRNP complex that is involved in spliceosome assembly, and as component of the precatalytic spliceosome (spliceosome B complex). This Homo sapiens (Human) protein is U4/U6 small nuclear ribonucleoprotein Prp4 (PRPF4).